We begin with the raw amino-acid sequence, 96 residues long: MLRLDLQFFASKKGVGSTKNGRDSIAKRLGAKRADGQFVTGGSILYRQRGTKIHPGLNVGRGGDDTLYAKIDGIVRFERLGRDRKRVSVYPVSKEA.

The propeptide occupies 1-9 (MLRLDLQFF).

The protein belongs to the bacterial ribosomal protein bL27 family. The N-terminus is cleaved by ribosomal processing cysteine protease Prp.

This chain is Large ribosomal subunit protein bL27, found in Geobacillus sp. (strain WCH70).